Here is a 166-residue protein sequence, read N- to C-terminus: uncharacterized protein (166 aa).

At A2 the chain carries N-acetylalanine.

Homodimer.

This is an uncharacterized protein from Arabidopsis thaliana (Mouse-ear cress).